A 428-amino-acid chain; its full sequence is Chaperone SurA (428 aa).

Positions 1–20 (MKNWKTLLLGIAMIANTSFA) are cleaved as a signal peptide. PpiC domains lie at 171-272 (STEL…KVND) and 282-382 (VTEV…ELLD).

Its subcellular location is the periplasm. It carries out the reaction [protein]-peptidylproline (omega=180) = [protein]-peptidylproline (omega=0). Its function is as follows. Chaperone involved in the correct folding and assembly of outer membrane proteins. Recognizes specific patterns of aromatic residues and the orientation of their side chains, which are found more frequently in integral outer membrane proteins. May act in both early periplasmic and late outer membrane-associated steps of protein maturation. This Salmonella paratyphi A (strain ATCC 9150 / SARB42) protein is Chaperone SurA.